The following is a 109-amino-acid chain: Cell division protein ZapA (109 aa).

Residues 22 to 99 (EQQDALNMAA…IEQALLEQGR (78 aa)) are a coiled coil.

The protein belongs to the ZapA family. Type 1 subfamily. As to quaternary structure, homodimer. Interacts with FtsZ.

It localises to the cytoplasm. In terms of biological role, activator of cell division through the inhibition of FtsZ GTPase activity, therefore promoting FtsZ assembly into bundles of protofilaments necessary for the formation of the division Z ring. It is recruited early at mid-cell but it is not essential for cell division. This chain is Cell division protein ZapA, found in Yersinia enterocolitica serotype O:8 / biotype 1B (strain NCTC 13174 / 8081).